The following is a 229-amino-acid chain: MDNTSFEKREFISVWVRDPQVHKEDFWHTYISYEICLHTNSMCFRKKTSCVRRRYSEFVWLRHKLQDNALLIELPKLPPWNPFFNLNNEFHITQRMQGLQQFLEAVLQTPLLLSDSRLHLFLQSQLSIAKMDACAQGHTHYTVAQAIQRCGGEARFPVEEQHQEDSKTCCDSDCDSTTSSGLGCSIEPATLVEQDLSHNERFAHEFQATNPEAELCSSLSSSPHGHSVI.

The PX domain occupies 11 to 128 (FISVWVRDPQ…HLFLQSQLSI (118 aa)). Residues Arg-54 and Arg-95 each coordinate a 1,2-diacyl-sn-glycero-3-phospho-(1D-myo-inositol-3-phosphate).

Belongs to the sorting nexin family.

It is found in the cytoplasm. Its subcellular location is the endosome membrane. The protein localises to the cytoskeleton. It localises to the microtubule organizing center. The protein resides in the centrosome. Functionally, probable phosphoinositide-binding protein involved in protein sorting and membrane trafficking in endosomes. May play a role in cilium biogenesis through regulation of the transport and the localization of proteins to the cilium. In Danio rerio (Zebrafish), this protein is Sorting nexin-10A (snx10a).